The following is a 335-amino-acid chain: Flagellar P-ring protein (335 aa).

Positions 1–17 (MNKLMLMLITFATSLLA) are cleaved as a signal peptide.

This sequence belongs to the FlgI family. In terms of assembly, the basal body constitutes a major portion of the flagellar organelle and consists of four rings (L,P,S, and M) mounted on a central rod.

It is found in the periplasm. The protein resides in the bacterial flagellum basal body. Assembles around the rod to form the L-ring and probably protects the motor/basal body from shearing forces during rotation. The polypeptide is Flagellar P-ring protein (flgI) (Borreliella burgdorferi (strain ATCC 35210 / DSM 4680 / CIP 102532 / B31) (Borrelia burgdorferi)).